The primary structure comprises 367 residues: Anhydro-N-acetylmuramic acid kinase (367 aa).

13–20 contacts ATP; it reads GTSMDGAD.

Belongs to the anhydro-N-acetylmuramic acid kinase family.

It catalyses the reaction 1,6-anhydro-N-acetyl-beta-muramate + ATP + H2O = N-acetyl-D-muramate 6-phosphate + ADP + H(+). Its pathway is amino-sugar metabolism; 1,6-anhydro-N-acetylmuramate degradation. The protein operates within cell wall biogenesis; peptidoglycan recycling. Catalyzes the specific phosphorylation of 1,6-anhydro-N-acetylmuramic acid (anhMurNAc) with the simultaneous cleavage of the 1,6-anhydro ring, generating MurNAc-6-P. Is required for the utilization of anhMurNAc either imported from the medium or derived from its own cell wall murein, and thus plays a role in cell wall recycling. The polypeptide is Anhydro-N-acetylmuramic acid kinase (Neisseria meningitidis serogroup A / serotype 4A (strain DSM 15465 / Z2491)).